Here is a 62-residue protein sequence, read N- to C-terminus: DNA-directed RNA polymerase subunit Rpo10 (62 aa).

Residues Cys-6, Cys-9, Cys-43, and Cys-44 each coordinate Zn(2+).

It belongs to the archaeal Rpo10/eukaryotic RPB10 RNA polymerase subunit family. In terms of assembly, part of the RNA polymerase complex. It depends on Zn(2+) as a cofactor.

The protein localises to the cytoplasm. It carries out the reaction RNA(n) + a ribonucleoside 5'-triphosphate = RNA(n+1) + diphosphate. Functionally, DNA-dependent RNA polymerase (RNAP) catalyzes the transcription of DNA into RNA using the four ribonucleoside triphosphates as substrates. In Methanospirillum hungatei JF-1 (strain ATCC 27890 / DSM 864 / NBRC 100397 / JF-1), this protein is DNA-directed RNA polymerase subunit Rpo10.